A 156-amino-acid chain; its full sequence is Myosin regulatory light chain, striated adductor muscle (156 aa).

Position 1 is a blocked amino end (Ala) (Ala1). EF-hand domains are found at residues 15 to 50 (KQIQ…LGRT) and 84 to 119 (DTEE…MGDN). Ca(2+) is bound by residues Asp28, Asp30, Asp32, and Asp39.

In terms of biological role, in molluscan muscle, calcium regulation is associated with myosin rather than with actin. Muscle myosin contains two types of light chains: the catalytic light chain, essential for ATPase activity, and the regulatory light chain, a calcium-binding protein responsible for Ca(2+) dependent binding and Ca(2+) dependent Mg-ATPase activity. The sequence is that of Myosin regulatory light chain, striated adductor muscle from Mizuhopecten yessoensis (Japanese scallop).